Consider the following 446-residue polypeptide: 23S rRNA (uracil(1939)-C(5))-methyltransferase RlmD (446 aa).

Positions 6–64 constitute a TRAM domain; it reads KKLPQESITCEIESLSHEGRGVSHKDGKTLFVEGALPGETVTARYVNSRRSYDELAVEE. Residues C77, C83, C86, and C165 each contribute to the [4Fe-4S] cluster site. The S-adenosyl-L-methionine site is built by Q275, F304, N309, E325, D352, and D377. The Nucleophile role is filled by C403.

This sequence belongs to the class I-like SAM-binding methyltransferase superfamily. RNA M5U methyltransferase family. RlmD subfamily.

It catalyses the reaction uridine(1939) in 23S rRNA + S-adenosyl-L-methionine = 5-methyluridine(1939) in 23S rRNA + S-adenosyl-L-homocysteine + H(+). In terms of biological role, catalyzes the formation of 5-methyl-uridine at position 1939 (m5U1939) in 23S rRNA. The chain is 23S rRNA (uracil(1939)-C(5))-methyltransferase RlmD from Hahella chejuensis (strain KCTC 2396).